A 72-amino-acid chain; its full sequence is Small ribosomal subunit protein bS18 (72 aa).

This sequence belongs to the bacterial ribosomal protein bS18 family. In terms of assembly, part of the 30S ribosomal subunit. Forms a tight heterodimer with protein bS6.

Its function is as follows. Binds as a heterodimer with protein bS6 to the central domain of the 16S rRNA, where it helps stabilize the platform of the 30S subunit. This Francisella tularensis subsp. novicida (strain U112) protein is Small ribosomal subunit protein bS18.